A 106-amino-acid polypeptide reads, in one-letter code: Antitoxin MazE3 (106 aa).

In terms of assembly, forms a complex with cognate toxin MazF3, possibly with 1:1 stoichiometry.

Antitoxin component of a type II toxin-antitoxin (TA) system. Upon expression in E.coli and M.smegmatis neutralizes the effect of cognate toxin MazF3. Overexpression of MazE3 alone decreased persister cells formation in M.smegmatis upon challenge with gentamicin or kanamycin. The chain is Antitoxin MazE3 (mazE3) from Mycobacterium tuberculosis (strain ATCC 25618 / H37Rv).